We begin with the raw amino-acid sequence, 78 residues long: MSRVCQVTGKRPVAGNNRSHALNATKRRFLPNLHSHRFWVEGEKRFVTLRVSAKGMRVIDKKGIETVLADLRARGEKY.

Belongs to the bacterial ribosomal protein bL28 family.

The polypeptide is Large ribosomal subunit protein bL28 (Pectobacterium carotovorum subsp. carotovorum (strain PC1)).